Consider the following 358-residue polypeptide: Ethanol acetyltransferase 1 (358 aa).

An AB hydrolase-1 domain is found at 59–166 (PIVFIHGLFG…NAPINQPHIS (108 aa)). Active-site charge relay system residues include Ser132, Asp156, and His305.

This sequence belongs to the AB hydrolase superfamily.

The protein localises to the mitochondrion. The catalysed reaction is ethanol + acetyl-CoA = ethyl acetate + CoA. The enzyme catalyses acetyl-CoA + H2O = acetate + CoA + H(+). It carries out the reaction ethyl acetate + H2O = ethanol + acetate + H(+). Alcohol acetyltransferase that catalyzes the synthesis of ethyl acetate from ethanol and acetyl-CoA. Can also function as a thioesterase by hydrolyzing acetyl-CoA in the absence of ethanol, as well as esterase hydrolyzing ethyl acetate. This chain is Ethanol acetyltransferase 1 (EAT1), found in Eremothecium cymbalariae (strain CBS 270.75 / DBVPG 7215 / KCTC 17166 / NRRL Y-17582) (Yeast).